The following is a 428-amino-acid chain: AP-1 complex subunit mu (428 aa).

An N-acetylalanine; partial modification is found at alanine 2. The 258-residue stretch at 169-426 folds into the MHD domain; that stretch reads KNEVFLDVVE…VCLSGDYQFR (258 aa).

Belongs to the adaptor complexes medium subunit family. In terms of assembly, adaptor protein complex 1 (AP-1) is a heterotetramer composed of two large adaptins (gamma-type subunit and beta-type subunit), a medium adaptin (mu-type subunit) and a small adaptin (sigma-type subunit).

It localises to the golgi apparatus. The protein localises to the trans-Golgi network. The protein resides in the cytoplasmic vesicle. Its subcellular location is the clathrin-coated vesicle membrane. Its function is as follows. Subunit of clathrin-associated adaptor protein complex 1 that plays a role in protein sorting in the trans-Golgi network (TGN) and endosomes. The AP complexes mediate the recruitment of clathrin to membranes and the recognition of sorting signals within the cytosolic tails of transmembrane cargo molecules. Also involved in early steps of phagocytosis and macropinocytosis. The chain is AP-1 complex subunit mu (apm1) from Dictyostelium discoideum (Social amoeba).